A 523-amino-acid chain; its full sequence is Ubiquilin (523 aa).

One can recognise a Ubiquitin-like domain in the interval 2–77 (VKINIKSSTD…VHLVKGAAPP (76 aa)). A disordered region spans residues 70 to 99 (LVKGAAPPPPPPVEQQVPTPSNTQPQGIPG). STI1 domains follow at residues 100–135 (VPQNINDMMNNPMIQEMFNSRMMDSLLDNPDIFRDM) and 139–178 (NPEMREVLNNNPEMAQMLSDPRQLRQSLEMMRNPELMREM). The segment covering 215-227 (NQQAASQNQTNSN) has biased composition (low complexity). Residues 215–325 (NQQAASQNQT…ASMFGGGGGG (111 aa)) are disordered. Polar residues predominate over residues 228-241 (PIQTNTDANPNSQP). The span at 245 to 278 (PWSTNSSSTSSNPTSSSPSSRPTTGSSTNTGASN) shows a compositional bias: low complexity. Residues 285–296 (SGGGGGMGGGTN) are compositionally biased toward gly residues. The segment covering 297–310 (NTGTNNTGSTNNTG) has biased composition (low complexity). STI1 domains are found at residues 339 to 380 (DPER…RQMM) and 383 to 415 (NPQLREAMNNPEFLNMMTNPENMNAMMQLQQAM). The UBA domain occupies 480–523 (PPEQRFRLQLEQLEELGFVDRAANISALTSTNGNINLAIDRLLR).

Stable protein which acts as an antagonist of nosA by repressing cellular differentiation after the tight-aggregate stage, when cells differentiate into two precursor cell types, prespore and prestalk cells, prior to the formation of fruiting bodies. The polypeptide is Ubiquilin (ubqln) (Dictyostelium discoideum (Social amoeba)).